Consider the following 62-residue polypeptide: Sperm protamine P1 (62 aa).

The interval 1–62 (MARYRRHSRS…RRYSRRRRRY (62 aa)) is disordered.

It belongs to the protamine P1 family. As to expression, testis.

The protein localises to the nucleus. It localises to the chromosome. Its function is as follows. Protamines substitute for histones in the chromatin of sperm during the haploid phase of spermatogenesis. They compact sperm DNA into a highly condensed, stable and inactive complex. This chain is Sperm protamine P1 (PRM1), found in Sminthopsis longicaudata (Long-tailed dunnart).